Here is a 291-residue protein sequence, read N- to C-terminus: POU class 2 homeobox associating-factor 2 (291 aa).

Residues 7-29 (KRVYQGVRVKHTVKDLLAEKRLR) enclose the OCA domain. The tract at residues 176-219 (AAPVADSPSLAGPDSGSSSPYRLTSGRSGSSIPSSSQPYTLQPL) is disordered. The span at 200 to 211 (SGRSGSSIPSSS) shows a compositional bias: low complexity.

This sequence belongs to the POU2AF family.

Transcriptional coactivator that may regulate cell type-specific differentiation pathways. This Danio rerio (Zebrafish) protein is POU class 2 homeobox associating-factor 2 (pou2af2).